We begin with the raw amino-acid sequence, 502 residues long: Glycerate kinase (502 aa).

The protein belongs to the glycerate kinase type-2 family.

The protein resides in the cytoplasm. It catalyses the reaction (R)-glycerate + ATP = (2R)-3-phosphoglycerate + ADP + H(+). The sequence is that of Glycerate kinase (glyctk) from Danio rerio (Zebrafish).